The sequence spans 192 residues: DNA dC-&gt;dU-editing enzyme APOBEC-3Ca (192 aa).

One can recognise a CMP/dCMP-type deaminase domain in the interval 15-141; that stretch reads IDPNTFRFHF…PNYQEGLCKL (127 aa). H69 contacts Zn(2+). The active-site Proton donor is the E71. Zn(2+) is bound by residues C100 and C103.

This sequence belongs to the cytidine and deoxycytidylate deaminase family. As to quaternary structure, (Microbial infection) Interacts with feline foamy virus protein Bet. This interaction does not induce APOBEC3Ca degradation but prevents its dimerization and incorporation into the virion. Zn(2+) is required as a cofactor.

The protein resides in the nucleus. Its subcellular location is the cytoplasm. The enzyme catalyses a 2'-deoxycytidine in single-stranded DNA + H2O + H(+) = a 2'-deoxyuridine in single-stranded DNA + NH4(+). DNA deaminase (cytidine deaminase) which acts as an inhibitor of retrovirus replication and retrotransposon mobility via deaminase-dependent and -independent mechanisms. Selectively targets single-stranded DNA and does not deaminate double-stranded DNA or single- or double-stranded RNA. Does not reduce infectivity of foamy feline virus, feline immunodeficiency virus or feline leukemia virus. The chain is DNA dC-&gt;dU-editing enzyme APOBEC-3Ca from Felis catus (Cat).